Reading from the N-terminus, the 858-residue chain is Heat shock protein 105 kDa (858 aa).

S2 carries the post-translational modification N-acetylserine. K471 bears the N6-acetyllysine mark. Disordered regions lie at residues 500–584 (KVPT…PPEA) and 796–858 (CEPV…MDLD). Acidic residues predominate over residues 504 to 514 (EENEMSSEADM). S509 and S510 each carry phosphoserine. A compositionally biased stretch (polar residues) spans 532 to 554 (QQDNSEAGTQPQVQTDAQQTSQS). A Phosphoserine modification is found at S557. At T561 the chain carries Phosphothreonine. Basic and acidic residues-rich tracts occupy residues 563-584 (EENKIPDADKANEKKVDQPPEA) and 805-814 (PKIESPKLER). S809 carries the post-translational modification Phosphoserine. Position 815 is a phosphothreonine (T815). Positions 821-832 (IDKKEEDLEDKN) are enriched in basic and acidic residues. Residues 849-858 (EKNSVNMDLD) show a composition bias toward polar residues.

Belongs to the heat shock protein 70 family. In terms of assembly, interacts with HSPA8/HSC70. Interacts with HSPA1A (via NBD) and HSPA1B (via NBD). In terms of processing, phosphorylation on Ser-509 may be important for regulation of the HSPA8/HSC70 chaperone activity. In terms of tissue distribution, highly expressed in testis. Present at lower levels in most brain regions, except cerebellum. Overexpressed in cancer cells.

It localises to the cytoplasm. In terms of biological role, acts as a nucleotide-exchange factor (NEF) for chaperone proteins HSPA1A and HSPA1B, promoting the release of ADP from HSPA1A/B thereby triggering client/substrate protein release. Prevents the aggregation of denatured proteins in cells under severe stress, on which the ATP levels decrease markedly. Inhibits HSPA8/HSC70 ATPase and chaperone activities. The polypeptide is Heat shock protein 105 kDa (HSPH1) (Homo sapiens (Human)).